A 307-amino-acid chain; its full sequence is MATH domain and coiled-coil domain-containing protein At3g58380 (307 aa).

In terms of domain architecture, MATH spans 6–132; it reads DKKFVWVIKD…CREITIVIEV (127 aa). Residues 238-290 are a coiled coil; it reads KVDWLEKKLKEVKEKKKNVDNGKARLQQIEEDLQKLNQKRLDLKDILDKEKAN.

This Arabidopsis thaliana (Mouse-ear cress) protein is MATH domain and coiled-coil domain-containing protein At3g58380.